Consider the following 127-residue polypeptide: Large ribosomal subunit protein bL12 (127 aa).

This sequence belongs to the bacterial ribosomal protein bL12 family. As to quaternary structure, homodimer. Part of the ribosomal stalk of the 50S ribosomal subunit. Forms a multimeric L10(L12)X complex, where L10 forms an elongated spine to which 2 to 4 L12 dimers bind in a sequential fashion. Binds GTP-bound translation factors.

Forms part of the ribosomal stalk which helps the ribosome interact with GTP-bound translation factors. Is thus essential for accurate translation. This chain is Large ribosomal subunit protein bL12, found in Streptomyces coelicolor (strain ATCC BAA-471 / A3(2) / M145).